We begin with the raw amino-acid sequence, 84 residues long: Large ribosomal subunit protein bL31 (84 aa).

Disordered regions lie at residues 1-41 and 63-84; these read MQHD…DSTN and RRYG…AADE. Positions 21–30 are enriched in polar residues; the sequence is EITTRSTMET. Acidic residues predominate over residues 68-84; the sequence is TDDDEGDDEETEDAADE.

Belongs to the bacterial ribosomal protein bL31 family. Type A subfamily. In terms of assembly, part of the 50S ribosomal subunit.

Binds the 23S rRNA. This Salinibacter ruber (strain DSM 13855 / M31) protein is Large ribosomal subunit protein bL31.